Consider the following 87-residue polypeptide: Putative membrane protein insertion efficiency factor (87 aa).

Belongs to the UPF0161 family.

The protein resides in the cell membrane. In terms of biological role, could be involved in insertion of integral membrane proteins into the membrane. This Streptococcus pyogenes serotype M12 (strain MGAS2096) protein is Putative membrane protein insertion efficiency factor.